A 692-amino-acid chain; its full sequence is Glycine--tRNA ligase beta subunit (692 aa).

Belongs to the class-II aminoacyl-tRNA synthetase family. Tetramer of two alpha and two beta subunits.

It is found in the cytoplasm. The enzyme catalyses tRNA(Gly) + glycine + ATP = glycyl-tRNA(Gly) + AMP + diphosphate. The protein is Glycine--tRNA ligase beta subunit of Oceanobacillus iheyensis (strain DSM 14371 / CIP 107618 / JCM 11309 / KCTC 3954 / HTE831).